The primary structure comprises 250 residues: Adenosine 5'-phosphosulfate reductase (250 aa).

Residues cysteine 119, cysteine 120, cysteine 202, and cysteine 205 each coordinate [4Fe-4S] cluster. Cysteine 230 (nucleophile; cysteine thiosulfonate intermediate) is an active-site residue.

It belongs to the PAPS reductase family. CysH subfamily. It depends on [4Fe-4S] cluster as a cofactor.

It localises to the cytoplasm. The catalysed reaction is [thioredoxin]-disulfide + sulfite + AMP + 2 H(+) = adenosine 5'-phosphosulfate + [thioredoxin]-dithiol. Its pathway is sulfur metabolism; hydrogen sulfide biosynthesis; sulfite from sulfate. Its function is as follows. Catalyzes the formation of sulfite from adenosine 5'-phosphosulfate (APS) using thioredoxin as an electron donor. This chain is Adenosine 5'-phosphosulfate reductase, found in Burkholderia cepacia (Pseudomonas cepacia).